The chain runs to 172 residues: UBA-like domain-containing protein 2 (172 aa).

The span at 118–130 shows a compositional bias: pro residues; it reads PPNQQPVWLPPSS. A disordered region spans residues 118–172; sequence PPNQQPVWLPPSSPTGHHTLHHHHHHMHPPPSWPPVSQPANGPQTPVISALHGQR. Residues 135–145 show a composition bias toward basic residues; sequence HTLHHHHHHMH.

It belongs to the UBALD family.

The protein is UBA-like domain-containing protein 2 (ubald2) of Danio rerio (Zebrafish).